The primary structure comprises 663 residues: UvrABC system protein B (663 aa).

In terms of domain architecture, Helicase ATP-binding spans 31–188 (DNIEGGEKAQ…NDLVDIQFER (158 aa)). 44 to 51 (GATGTGKT) contributes to the ATP binding site. Residues 97–120 (YYDYYQPEAYVPSSDTYIEKDSSV) carry the Beta-hairpin motif. Residues 435–601 (QMDDLLGEIN…TIKKDIRDLI (167 aa)) form the Helicase C-terminal domain. Positions 627–662 (QEAIKKLQKQMQEAAELLDFELAAQIRDMVLELKAM) constitute a UVR domain.

This sequence belongs to the UvrB family. In terms of assembly, forms a heterotetramer with UvrA during the search for lesions. Interacts with UvrC in an incision complex.

It is found in the cytoplasm. The UvrABC repair system catalyzes the recognition and processing of DNA lesions. A damage recognition complex composed of 2 UvrA and 2 UvrB subunits scans DNA for abnormalities. Upon binding of the UvrA(2)B(2) complex to a putative damaged site, the DNA wraps around one UvrB monomer. DNA wrap is dependent on ATP binding by UvrB and probably causes local melting of the DNA helix, facilitating insertion of UvrB beta-hairpin between the DNA strands. Then UvrB probes one DNA strand for the presence of a lesion. If a lesion is found the UvrA subunits dissociate and the UvrB-DNA preincision complex is formed. This complex is subsequently bound by UvrC and the second UvrB is released. If no lesion is found, the DNA wraps around the other UvrB subunit that will check the other stand for damage. The protein is UvrABC system protein B of Streptococcus mutans serotype c (strain ATCC 700610 / UA159).